A 1543-amino-acid polypeptide reads, in one-letter code: MSAAGVPAELNNLGAPITATTQNPSGLANSQVTSGPVSSATQHDEHRSSAGNTLADEEDDKAVEAEKAEAIDAAGDGKQKRLPADSSEDIVAELEPHHVSVHRGKEEFAALERKYSNLSQRSQHELHRPTTRHSVRSSFSRKDRVVSRLTQDDAEKAKEGEGEFNLVEVLRSGRENQDEAGIKRKAVGVVWEDHEVIGAGGMRINIRNFSSAIIEQFMMPAIKVLGIFGFNPFAPKPKAILHPSSGLLKPGEMCLVLGRPEAGCTTFLKTITNQRAGYMEINGNVEYAGVGWKEMRKRYAGEVVYNQEDDDHLPTLTVAQTIRFALATKTPKKKIPGVSAKQFQDDMLDLLLSMLNIKHTANTIVGNAFVRGVSGGERKRVSIAEMFCSGATVCSWDNSTRGLDASTALDYAKSLRLLTDIMGQTTFVSLYQAGEGIYDQFDKVLVLNEGHVAYFGPAKEARQYMIGLGYRDLPRQTTADYLSGCTDVNERRFADGRDATNVPATPEEMGQAYRESEICARMTREREEYKHLMAEDATARENFKQAVLEQKHKGVGKKSPYTVSFLQQVFIIFKRQLRLKFQDHFGISTGFATSIIIALIVGSVYFRLPETASGAFTRGGLLFLGLLFNALTSFSELPSQMLGRSVLYRQNEYRFYRPAAFALAAVLADVPYNASVIFLFSIVLYFMGGLYSSGGAFFMFFLFVFLTFMVMSAFFRTLGVATSDYNVAARLASVLISFMVTYTGYMIPVQRMKRWLFWIFYLNPLSYGYEAIFANEFSRISLTCDSSYTIPRNIPEAGITGYPDTLGPNQMCSIFGSTPGDPNVSGSDYMAVGYSYYKAHIWRNFGILLGFFTFFMFLQMLFIEVLEQGAKHFSINVYKKEDKDLKAKNERLAERREAFRAGELEQDLSELKMRPEPFTWEGLSYTVPVPGGHRQLLNDIYGYVKPGSLTALMGASGAGKTTLLDVLASRKNIGVVEGDILMNGRPIGTDFQRGCAYAEQQDTHEWTTTVREALQYSAYLRQPQHVPKQEKDDYVEDIIELLELQELADAMIGFPNYGLSVEARKRVTIGVELAAKPELLLFLDEPTSGLDGQSAYNIVRFLKKLCAAGQKILCTIHQPNALLFQSFDRLLLLQRGGECVYFGDIGPDSKVLIDYLERNGAEVPHDANPAEFMLEAIGAGSRKRIGSDWGEKWRNSPEFAEVKREIQELKAEALAKPIEEKSNRTEYATSFLFQLKTVLHRTNVALWRNADYQWTRLFAHLAIGLIVTLTFLQLDNSVQSLQYRVFAIFFATVLPALILAQIEPQYIMSRMTFNREASSKMYSSTVFALTQLLSEMPYSLGCAVSFFLLLYYGVGFPYASSRAGYFFLMILVTEVYAVTLGQAVAALSPTILIAALFNPFLLVLFSIFCGVTAPPPTLPYFWRKWMWPLDPFTRLISGLVSTVLQDQEVVCKDGEYQVFPAPSGQTCQQWAGAFAEAVGGYINNPDSTGDCQFCQYRSGQAFFVPLEISFSTRWRDFGIFICYVVFNILVLLIAARFLKWQRR.

The disordered stretch occupies residues 1–85 (MSAAGVPAEL…DGKQKRLPAD (85 aa)). Residues 18-41 (TATTQNPSGLANSQVTSGPVSSAT) show a composition bias toward polar residues. Basic and acidic residues predominate over residues 62–83 (AVEAEKAEAIDAAGDGKQKRLP). N-linked (GlcNAc...) asparagine glycosylation occurs at Asn117. The interval 119–157 (SQRSQHELHRPTTRHSVRSSFSRKDRVVSRLTQDDAEKA) is disordered. The span at 140-157 (SRKDRVVSRLTQDDAEKA) shows a compositional bias: basic and acidic residues. N-linked (GlcNAc...) asparagine glycosylation is found at Asn208 and Asn398. The ABC transporter 1 domain maps to 222-474 (IKVLGIFGFN…MIGLGYRDLP (253 aa)). 5 helical membrane-spanning segments follow: residues 585-605 (FGIS…GSVY), 619-639 (GGLL…ELPS), 670-690 (VPYN…MGGL), 695-715 (GAFF…SAFF), and 727-747 (VAAR…GYMI). N-linked (GlcNAc...) asparagine glycosylation is present at Asn823. The chain crosses the membrane as a helical span at residues 845–865 (FGILLGFFTFFMFLQMLFIEV). Residues 918-1160 (FTWEGLSYTV…VLIDYLERNG (243 aa)) form the ABC transporter 2 domain. 954–961 (GASGAGKT) contributes to the ATP binding site. Asn1223 carries N-linked (GlcNAc...) asparagine glycosylation. 6 consecutive transmembrane segments (helical) span residues 1254–1274 (WTRL…FLQL), 1285–1305 (VFAI…IEPQ), 1336–1356 (MPYS…GVGF), 1366–1386 (FFLM…AVAA), 1391–1411 (ILIA…FCGV), and 1517–1537 (FGIF…AARF).

Belongs to the ABC transporter superfamily. ABCG family. PDR (TC 3.A.1.205) subfamily.

It is found in the cell membrane. The catalysed reaction is itraconazole(in) + ATP + H2O = itraconazole(out) + ADP + phosphate + H(+). It carries out the reaction voriconazole(in) + ATP + H2O = voriconazole(out) + ADP + phosphate + H(+). It catalyses the reaction fluconazole(in) + ATP + H2O = fluconazole(out) + ADP + phosphate + H(+). Its function is as follows. Major pleiotropic ABC efflux transporter that confers resistance to structurally and functionally unrelated compounds including azoles such as fluconazole (FLC), itraconazole (ITC), posaconazole (POS), and voriconazole (VRC). Is also able to efflux the eukaryote protein synthesis inhibitor cycloheximide (CHX). The chain is ABC multidrug transporter AFR1 from Cryptococcus neoformans var. grubii serotype A (strain H99 / ATCC 208821 / CBS 10515 / FGSC 9487) (Filobasidiella neoformans var. grubii).